The following is a 208-amino-acid chain: Ribosomal RNA large subunit methyltransferase E (208 aa).

S-adenosyl-L-methionine is bound by residues Gly63, Trp65, Asp83, Asp99, and Asp124. Lys164 functions as the Proton acceptor in the catalytic mechanism.

The protein belongs to the class I-like SAM-binding methyltransferase superfamily. RNA methyltransferase RlmE family.

The protein resides in the cytoplasm. The catalysed reaction is uridine(2552) in 23S rRNA + S-adenosyl-L-methionine = 2'-O-methyluridine(2552) in 23S rRNA + S-adenosyl-L-homocysteine + H(+). Specifically methylates the uridine in position 2552 of 23S rRNA at the 2'-O position of the ribose in the fully assembled 50S ribosomal subunit. This Hamiltonella defensa subsp. Acyrthosiphon pisum (strain 5AT) protein is Ribosomal RNA large subunit methyltransferase E.